The chain runs to 318 residues: ADP-L-glycero-D-manno-heptose-6-epimerase (318 aa).

NADP(+) is bound by residues 10-11, 31-32, Lys-38, Lys-53, 80-84, and Asn-97; these read FI, DD, and EGACS. The active-site Proton acceptor is Tyr-144. Lys-148 is a binding site for NADP(+). Asn-173 contacts substrate. NADP(+) contacts are provided by Val-174 and Lys-182. Catalysis depends on Lys-182, which acts as the Proton acceptor. Substrate is bound by residues Lys-184, His-191, 205–208, Arg-218, and Tyr-282; that span reads FGAW.

The protein belongs to the NAD(P)-dependent epimerase/dehydratase family. HldD subfamily. As to quaternary structure, homopentamer. NADP(+) is required as a cofactor.

The catalysed reaction is ADP-D-glycero-beta-D-manno-heptose = ADP-L-glycero-beta-D-manno-heptose. The protein operates within nucleotide-sugar biosynthesis; ADP-L-glycero-beta-D-manno-heptose biosynthesis; ADP-L-glycero-beta-D-manno-heptose from D-glycero-beta-D-manno-heptose 7-phosphate: step 4/4. Functionally, catalyzes the interconversion between ADP-D-glycero-beta-D-manno-heptose and ADP-L-glycero-beta-D-manno-heptose via an epimerization at carbon 6 of the heptose. The sequence is that of ADP-L-glycero-D-manno-heptose-6-epimerase from Chromohalobacter salexigens (strain ATCC BAA-138 / DSM 3043 / CIP 106854 / NCIMB 13768 / 1H11).